The sequence spans 624 residues: (-)-beta-phellandrene synthase 3, chloroplastic (624 aa).

Residues 1–48 (MAIVSSVPLASKSCLHKSLISSIHKLKPFCRTIPTLGMSRPGKYVMPS) constitute a chloroplast transit peptide. Mg(2+) is bound by residues Asp375, Asp379, and Asp527. The DDXXD motif signature appears at 375–379 (DDMYD).

This sequence belongs to the terpene synthase family. Tpsd subfamily. Mg(2+) is required as a cofactor. The cofactor is Mn(2+).

The protein localises to the plastid. Its subcellular location is the chloroplast. It carries out the reaction (2E)-geranyl diphosphate = (-)-beta-phellandrene + diphosphate. It functions in the pathway terpene metabolism; oleoresin biosynthesis. Terpene synthase (TPS) involved in the biosynthesis of monoterpene natural products included in conifer oleoresin secretions and volatile emissions; these compounds contribute to biotic and abiotic stress defense against herbivores and pathogens. Catalyzes the conversion of (2E)-geranyl diphosphate (GPP) to (-)-beta-phellandrene. This chain is (-)-beta-phellandrene synthase 3, chloroplastic, found in Picea sitchensis (Sitka spruce).